We begin with the raw amino-acid sequence, 343 residues long: Homeobox protein Hox-D13 (343 aa).

Disordered regions lie at residues 1–28 (MSRAGSWDMDGLRADGGGAGGAPASSSS) and 78–115 (GTSERTGSSSSSSSSAVVAARPEAPPAKECPAPTPAAA). Residues 85-115 (SSSSSSSSAVVAARPEAPPAKECPAPTPAAA) show a composition bias toward low complexity. The segment at residues 276-335 (GRKKRVPYTKLQLKELENEYAINKFINKDKRRRISAATNLSERQVTIWFQNRRVKDKKIV) is a DNA-binding region (homeobox).

This sequence belongs to the Abd-B homeobox family.

The protein localises to the nucleus. In terms of biological role, sequence-specific transcription factor that binds gene promoters and activates their transcription. Part of a developmental regulatory system that provides cells with specific positional identities on the anterior-posterior axis. The protein is Homeobox protein Hox-D13 (HOXD13) of Homo sapiens (Human).